The chain runs to 227 residues: Lipoprotein-releasing system ATP-binding protein LolD (227 aa).

Positions 6 to 227 constitute an ABC transporter domain; the sequence is LTSQKLYKSY…LHEGSLYARE (222 aa). Position 42 to 49 (42 to 49) interacts with ATP; sequence GPSGSGKS.

It belongs to the ABC transporter superfamily. Lipoprotein translocase (TC 3.A.1.125) family. As to quaternary structure, the complex is composed of two ATP-binding proteins (LolD) and two transmembrane proteins (LolC and LolE).

The protein resides in the cell inner membrane. Functionally, part of the ABC transporter complex LolCDE involved in the translocation of mature outer membrane-directed lipoproteins, from the inner membrane to the periplasmic chaperone, LolA. Responsible for the formation of the LolA-lipoprotein complex in an ATP-dependent manner. The chain is Lipoprotein-releasing system ATP-binding protein LolD from Legionella pneumophila (strain Paris).